Consider the following 518-residue polypeptide: Probable cytosol aminopeptidase (518 aa).

Residues lysine 270 and aspartate 275 each contribute to the Mn(2+) site. Lysine 282 is a catalytic residue. Residues aspartate 293, aspartate 352, and glutamate 354 each coordinate Mn(2+). The active site involves arginine 356. A compositionally biased stretch (polar residues) spans 495 to 507; sequence SRTTRQPGSTGET. The segment at 495 to 518 is disordered; it reads SRTTRQPGSTGETGSRKNRRKSKE.

The protein belongs to the peptidase M17 family. It depends on Mn(2+) as a cofactor.

It is found in the cytoplasm. The catalysed reaction is Release of an N-terminal amino acid, Xaa-|-Yaa-, in which Xaa is preferably Leu, but may be other amino acids including Pro although not Arg or Lys, and Yaa may be Pro. Amino acid amides and methyl esters are also readily hydrolyzed, but rates on arylamides are exceedingly low.. It catalyses the reaction Release of an N-terminal amino acid, preferentially leucine, but not glutamic or aspartic acids.. In terms of biological role, presumably involved in the processing and regular turnover of intracellular proteins. Catalyzes the removal of unsubstituted N-terminal amino acids from various peptides. The chain is Probable cytosol aminopeptidase from Nitrosospira multiformis (strain ATCC 25196 / NCIMB 11849 / C 71).